The sequence spans 763 residues: Endoplasmic reticulum membrane sensor NFE2L1 (763 aa).

A helical; Signal-anchor for type II membrane protein membrane pass occupies residues 7–24; sequence YLTEGLLQFTILLSLIGV. The tract at residues 108-150 is disordered; the sequence is DPEGSVSGSQPSSGLALESSSGLQDVTGPDNGVRESETEQGFS. Positions 116-131 are enriched in low complexity; that stretch reads SQPSSGLALESSSGLQ. The cholesterol recognition/amino acid consensus (CRAC) region stretch occupies residues 180-188; sequence IFDYSHRQK. N-linked (GlcNAc...) asparagine glycans are attached at residues N338 and N350. Residues 369 to 373 are CPD; it reads SPEVE. N413 carries N-linked (GlcNAc...) asparagine glycosylation. Disordered regions lie at residues 460–523 and 585–604; these read EEEF…DSET and TLKK…QMSR. Positions 466–470 match the Destruction motif motif; the sequence is DSGLS. Residues 466–514 show a composition bias toward low complexity; that stretch reads DSGLSLDSSHSPSSLSSSEGSSSSSSSSSSSSSSSASSSASSSFSEEGA. Position 519 is a phosphoserine; by CK2 (S519). Basic and acidic residues predominate over residues 589–604; that stretch reads GSKEKQADFLDKQMSR. S590 carries the post-translational modification Phosphoserine; by PKA. Residues 645–708 enclose the bZIP domain; that stretch reads LIRDIRRRGK…RQMKQKVQSL (64 aa). The tract at residues 647–666 is basic motif; sequence RDIRRRGKNKMAAQNCRKRK. Positions 673-687 are leucine-zipper; sequence LERDVEDLQRDKARL. Residues 752 to 759 carry the Nuclear localization signal motif; sequence RRQERKPK.

It belongs to the bZIP family. CNC subfamily. In terms of assembly, interacts with KEAP1. As to quaternary structure, interacts (via CPD region) with FBXW7; leading to its ubiquitination and degradation. Interacts with SYVN1/HRD1; leading to its ubiquitination and degradation. Interacts (when ubiquitinated) with DDI2; leading to its cleavage. Interacts (via the bZIP domain) with small MAF protein (MAFF, MAFG or MAFK); required for binding to antioxidant response elements (AREs) on DNA. Interacts (via Destruction motif) with BTRC; leading to its ubiquitination and degradation. Interacts with CEBPB; the heterodimer represses expression of DSPP during odontoblast differentiation. Interacts with MOTS-c, a peptide produced by the mitochondrially encoded 12S rRNA MT-RNR1. Post-translationally, cleaved at Leu-104 by the aspartyl protease DDI2 following retrotranslocation, releasing the protein from the endoplasmic reticulum membrane and forming the transcription factor NRF1 that translocates into the nucleus. Ubiquitination is prerequisite for cleavage by aspartyl protease DDI2. N-glycosylated in normal conditions, when it has a single-pass type II membrane protein topology, with the DNA-binding domain facing the endoplasmic reticulum lumen. Deglycosylated during retrotranslocation to the cytosolic side of the membrane, to have a single-pass type III membrane protein topology with the major part of the protein facing the cytosol. In terms of processing, ubiquitinated by the SCF(FBXW7) complex and SYVN1/HRD1, leading to its degradation by the proteasome. Ubiquitinated during retrotranslocation to the cytosolic side of the membrane: ubiquitination does not lead to degradation and is required for processing by the aspartyl protease DDI2 and subsequent release from the endoplasmic reticulum membrane. Post-translationally, phosphorylation by CK2 at Ser-519 inhibits transcription factor activity, possibly by affecting DNA-binding activity. Phosphorylation at Ser-590 is required for interaction with CEBPB. Ubiquitinated by the SCF(BTRC) complex in the nucleus, leading to its degradation by the proteasome.

The protein localises to the endoplasmic reticulum membrane. It is found in the nucleus. Its function is as follows. Endoplasmic reticulum membrane sensor that translocates into the nucleus in response to various stresses to act as a transcription factor. Constitutes a precursor of the transcription factor NRF1. Able to detect various cellular stresses, such as cholesterol excess, oxidative stress or proteasome inhibition. In response to stress, it is released from the endoplasmic reticulum membrane following cleavage by the protease DDI2 and translocates into the nucleus to form the transcription factor NRF1. Acts as a key sensor of cholesterol excess: in excess cholesterol conditions, the endoplasmic reticulum membrane form of the protein directly binds cholesterol via its CRAC motif, preventing cleavage and release of the transcription factor NRF1, thereby allowing expression of genes promoting cholesterol removal, such as CD36. Involved in proteasome homeostasis: in response to proteasome inhibition, it is released from the endoplasmic reticulum membrane, translocates to the nucleus and activates expression of genes encoding proteasome subunits. In terms of biological role, CNC-type bZIP family transcription factor that translocates to the nucleus and regulates expression of target genes in response to various stresses. Heterodimerizes with small-Maf proteins (MAFF, MAFG or MAFK) and binds DNA motifs including the antioxidant response elements (AREs), which regulate expression of genes involved in oxidative stress response. Activates or represses expression of target genes, depending on the context. Plays a key role in cholesterol homeostasis by acting as a sensor of cholesterol excess: in low cholesterol conditions, translocates into the nucleus and represses expression of genes involved in defense against cholesterol excess, such as CD36. In excess cholesterol conditions, the endoplasmic reticulum membrane form of the protein directly binds cholesterol via its CRAC motif, preventing cleavage and release of the transcription factor NRF1, thereby allowing expression of genes promoting cholesterol removal. Critical for redox balance in response to oxidative stress: acts by binding the AREs motifs on promoters and mediating activation of oxidative stress response genes, such as GCLC, GCLM, GSS, MT1 and MT2. Plays an essential role during fetal liver hematopoiesis: probably has a protective function against oxidative stress and is involved in lipid homeostasis in the liver. Involved in proteasome homeostasis: in response to proteasome inhibition, mediates the 'bounce-back' of proteasome subunits by translocating into the nucleus and activating expression of genes encoding proteasome subunits. Also involved in regulating glucose flux. Together with CEBPB; represses expression of DSPP during odontoblast differentiation. In response to ascorbic acid induction, activates expression of SP7/Osterix in osteoblasts. The sequence is that of Endoplasmic reticulum membrane sensor NFE2L1 from Bos taurus (Bovine).